Here is a 677-residue protein sequence, read N- to C-terminus: MTQVAKKILVTCALPYANGSIHLGHMLEHIQADVWVRYQRMRGHEVNFICADDAHGTPIMLKAQQLGITPEQMIGEMSQEHQTDFAGFNISYDNYHSTHSDENRELSELIYTRLKENGFIKNRTISQLYDPEKGMFLPDRFVKGTCPKCKSADQYGDNCEVCGATYSPTELIEPKSVVSGATPVMRDSEHFFFDLPSFSEMLQAWTRSGALQEQVANKMQEWFESGLQQWDISRDAPYFGFEIPNAPGKYFYVWLDAPIGYMGSFKNLCDKRGDTTSFDEYWKKDSDAELYHFIGKDIVYFHSLFWPAMLEGSHFRKPTNLFVHGYVTVNGAKMSKSRGTFIKASTWLKHFDADSLRYYYTAKLSSRIDDIDLNLEDFVQRVNADIVNKVVNLASRNAGFINKRFDGVLAAELADPQLYKTFTDAAAVIGEAWESREFGKAIREIMALADVANRYVDEQAPWVVAKQEGRDADLQAICSMGINLFRVLMTYLKPVLPTLSERVEAFLNSELNWDAIEQPLLGHKVNTFKALYNRIDMKQVEALVEASKEEVKAAAAPVTGPLADFPIQETITFDDFAKIDLRVALIENAEFVDGSDKLLRLTLDLGGEKRNVFSGIRSAYPDPQALIGRQTVMVANLAPRKMRFGVSEGMVMAAGPGGKDIFLLSPDDGAKPGQQVK.

The 'HIGH' region signature appears at 15 to 25 (PYANGSIHLGH). Residues C146, C149, C159, and C162 each coordinate Zn(2+). Positions 333-337 (KMSKS) match the 'KMSKS' region motif. K336 lines the ATP pocket. The tRNA-binding domain maps to 575 to 677 (DFAKIDLRVA…DGAKPGQQVK (103 aa)).

This sequence belongs to the class-I aminoacyl-tRNA synthetase family. MetG type 1 subfamily. As to quaternary structure, homodimer. The cofactor is Zn(2+).

It is found in the cytoplasm. It catalyses the reaction tRNA(Met) + L-methionine + ATP = L-methionyl-tRNA(Met) + AMP + diphosphate. Its function is as follows. Is required not only for elongation of protein synthesis but also for the initiation of all mRNA translation through initiator tRNA(fMet) aminoacylation. In Salmonella paratyphi B (strain ATCC BAA-1250 / SPB7), this protein is Methionine--tRNA ligase.